The following is a 37-amino-acid chain: MKVQPSVKKICEKCKVIRRNGRVMVICENLRHKQRQG.

Belongs to the bacterial ribosomal protein bL36 family.

This chain is Large ribosomal subunit protein bL36, found in Rhodococcus erythropolis (strain PR4 / NBRC 100887).